The following is a 318-amino-acid chain: Dihydroorotate dehydrogenase B (NAD(+)), catalytic subunit (318 aa).

Residues serine 19 and 43 to 44 contribute to the FMN site; that span reads KT. Substrate-binding positions include lysine 43, 69–73, and asparagine 125; that span reads NAMGL. FMN is bound at residue asparagine 125. Catalysis depends on cysteine 128, which acts as the Nucleophile. FMN is bound by residues lysine 164 and valine 192. 193-194 serves as a coordination point for substrate; it reads NT. FMN is bound by residues glycine 219, 247-248, and 269-270; these read GG and AT.

This sequence belongs to the dihydroorotate dehydrogenase family. Type 1 subfamily. Heterotetramer of 2 PyrK and 2 PyrD type B subunits. It depends on FMN as a cofactor.

It is found in the cytoplasm. The enzyme catalyses (S)-dihydroorotate + NAD(+) = orotate + NADH + H(+). It functions in the pathway pyrimidine metabolism; UMP biosynthesis via de novo pathway; orotate from (S)-dihydroorotate (NAD(+) route): step 1/1. Functionally, catalyzes the conversion of dihydroorotate to orotate with NAD(+) as electron acceptor. The chain is Dihydroorotate dehydrogenase B (NAD(+)), catalytic subunit (pyrD) from Methanopyrus kandleri (strain AV19 / DSM 6324 / JCM 9639 / NBRC 100938).